The following is a 610-amino-acid chain: UvrABC system protein C (610 aa).

A GIY-YIG domain is found at 16 to 94 (SQPGVYRMYD…IKLYQPRYNV (79 aa)). The region spanning 204-239 (DQVLTQLIARMEKASQSLEFEEAARIRDQIQAVRRV) is the UVR domain. Residues 540–559 (HAISGHRKKRAKVKSTSSLE) are disordered. A compositionally biased stretch (basic residues) spans 543 to 552 (SGHRKKRAKV).

Belongs to the UvrC family. In terms of assembly, interacts with UvrB in an incision complex.

It localises to the cytoplasm. In terms of biological role, the UvrABC repair system catalyzes the recognition and processing of DNA lesions. UvrC both incises the 5' and 3' sides of the lesion. The N-terminal half is responsible for the 3' incision and the C-terminal half is responsible for the 5' incision. The polypeptide is UvrABC system protein C (Klebsiella pneumoniae (strain 342)).